We begin with the raw amino-acid sequence, 991 residues long: Valine--tRNA ligase (991 aa).

Residues 43–53 (PNVTGTLHMGH) carry the 'HIGH' region motif. The short motif at 582 to 586 (KMSKS) is the 'KMSKS' region element. Lysine 585 is an ATP binding site. The tract at residues 689–711 (AHSPAQHQAGQDGQDAPRTPQPR) is disordered. The span at 693–704 (AQHQAGQDGQDA) shows a compositional bias: low complexity. A coiled-coil region spans residues 925 to 988 (LIDVDAERAR…TQLNGLRERR (64 aa)).

Belongs to the class-I aminoacyl-tRNA synthetase family. ValS type 1 subfamily. Monomer.

It is found in the cytoplasm. It catalyses the reaction tRNA(Val) + L-valine + ATP = L-valyl-tRNA(Val) + AMP + diphosphate. Its function is as follows. Catalyzes the attachment of valine to tRNA(Val). As ValRS can inadvertently accommodate and process structurally similar amino acids such as threonine, to avoid such errors, it has a 'posttransfer' editing activity that hydrolyzes mischarged Thr-tRNA(Val) in a tRNA-dependent manner. This is Valine--tRNA ligase from Xylella fastidiosa (strain M12).